The primary structure comprises 491 residues: Trypanothione reductase (491 aa).

35-51 provides a ligand contact to FAD; the sequence is DLQKHHGPPHYAALGGT. A disulfide bridge links Cys52 with Cys57. His461 acts as the Proton acceptor in catalysis.

This sequence belongs to the class-I pyridine nucleotide-disulfide oxidoreductase family. In terms of assembly, homodimer. The cofactor is FAD. Post-translationally, the N-terminus is blocked.

It is found in the cytoplasm. It catalyses the reaction trypanothione + NADP(+) = trypanothione disulfide + NADPH + H(+). Trypanothione is the parasite analog of glutathione; this enzyme is the equivalent of glutathione reductase. This is Trypanothione reductase (TPR) from Crithidia fasciculata.